We begin with the raw amino-acid sequence, 401 residues long: Argininosuccinate synthase (401 aa).

A10 to S18 lines the ATP pocket. Y89 contacts L-citrulline. Position 119 (G119) interacts with ATP. Positions 121, 125, and 126 each coordinate L-aspartate. N125 serves as a coordination point for L-citrulline. Residues R129, S177, S186, E262, and Y274 each contribute to the L-citrulline site.

Belongs to the argininosuccinate synthase family. Type 1 subfamily. As to quaternary structure, homotetramer.

It is found in the cytoplasm. The catalysed reaction is L-citrulline + L-aspartate + ATP = 2-(N(omega)-L-arginino)succinate + AMP + diphosphate + H(+). It functions in the pathway amino-acid biosynthesis; L-arginine biosynthesis; L-arginine from L-ornithine and carbamoyl phosphate: step 2/3. This chain is Argininosuccinate synthase, found in Thermosynechococcus vestitus (strain NIES-2133 / IAM M-273 / BP-1).